The chain runs to 260 residues: Phosphate import ATP-binding protein PstB (260 aa).

One can recognise an ABC transporter domain in the interval 14–255 (IETENLNLFY…PKNTKTEEYI (242 aa)). An ATP-binding site is contributed by 46–53 (GPSGCGKS).

It belongs to the ABC transporter superfamily. Phosphate importer (TC 3.A.1.7) family. In terms of assembly, the complex is composed of two ATP-binding proteins (PstB), two transmembrane proteins (PstC and PstA) and a solute-binding protein (PstS).

The protein localises to the cell inner membrane. It carries out the reaction phosphate(out) + ATP + H2O = ADP + 2 phosphate(in) + H(+). In terms of biological role, part of the ABC transporter complex PstSACB involved in phosphate import. Responsible for energy coupling to the transport system. The polypeptide is Phosphate import ATP-binding protein PstB (Borreliella burgdorferi (strain ATCC 35210 / DSM 4680 / CIP 102532 / B31) (Borrelia burgdorferi)).